A 188-amino-acid chain; its full sequence is MEKFKKAGKIASKVRKKAIKAVKGEMKILDLAEFIENEIEKMGAKPAFPCNISVNEITAHYSPPCNDDRKILPGDLVKIDIGVHVDGFIGDTATTVLVEGYEDLKNYNDELAEKNKKMIEAAESALENAINTIRDGVEIGKIGEVIENTINKFGFKPISNLTGHTIDRWVLHSGLSIPNVKGQNSHKL.

Residue H60 coordinates substrate. The a divalent metal cation site is built by D80, D91, and H164. H172 serves as a coordination point for substrate.

This sequence belongs to the peptidase M24A family. Methionine aminopeptidase archaeal type 2 subfamily. Monomer. Co(2+) is required as a cofactor. It depends on Zn(2+) as a cofactor. Mn(2+) serves as cofactor. The cofactor is Fe(2+).

The enzyme catalyses Release of N-terminal amino acids, preferentially methionine, from peptides and arylamides.. Functionally, removes the N-terminal methionine from nascent proteins. The N-terminal methionine is often cleaved when the second residue in the primary sequence is small and uncharged (Met-Ala-, Cys, Gly, Pro, Ser, Thr, or Val). This is Methionine aminopeptidase (map) from Methanothermus fervidus.